The sequence spans 237 residues: Ribonuclease PH (237 aa).

Phosphate contacts are provided by residues arginine 86 and 124–126; that span reads GTR.

Belongs to the RNase PH family. As to quaternary structure, homohexameric ring arranged as a trimer of dimers.

It carries out the reaction tRNA(n+1) + phosphate = tRNA(n) + a ribonucleoside 5'-diphosphate. In terms of biological role, phosphorolytic 3'-5' exoribonuclease that plays an important role in tRNA 3'-end maturation. Removes nucleotide residues following the 3'-CCA terminus of tRNAs; can also add nucleotides to the ends of RNA molecules by using nucleoside diphosphates as substrates, but this may not be physiologically important. Probably plays a role in initiation of 16S rRNA degradation (leading to ribosome degradation) during starvation. The polypeptide is Ribonuclease PH (Rhodopseudomonas palustris (strain ATCC BAA-98 / CGA009)).